Here is a 131-residue protein sequence, read N- to C-terminus: Ribonuclease P protein component (131 aa).

The protein belongs to the RnpA family. Consists of a catalytic RNA component (M1 or rnpB) and a protein subunit.

It carries out the reaction Endonucleolytic cleavage of RNA, removing 5'-extranucleotides from tRNA precursor.. Functionally, RNaseP catalyzes the removal of the 5'-leader sequence from pre-tRNA to produce the mature 5'-terminus. It can also cleave other RNA substrates such as 4.5S RNA. The protein component plays an auxiliary but essential role in vivo by binding to the 5'-leader sequence and broadening the substrate specificity of the ribozyme. This chain is Ribonuclease P protein component, found in Synechococcus sp. (strain WH7803).